The following is a 319-amino-acid chain: ATP-dependent 6-phosphofructokinase (319 aa).

Residue Gly11 coordinates ATP. An ADP-binding site is contributed by 21 to 25 (RAVVR). Residues 72–73 (RC) and 102–105 (GDGS) contribute to the ATP site. Asp103 contributes to the Mg(2+) binding site. Residue 125–127 (TID) coordinates substrate. Asp127 serves as the catalytic Proton acceptor. Arg154 contacts ADP. Residues Arg162 and 169–171 (MGR) each bind substrate. ADP is bound by residues 185 to 187 (GAE), Arg211, and 213 to 215 (KKH). Substrate-binding positions include Glu222, Arg243, and 249–252 (HIQR).

This sequence belongs to the phosphofructokinase type A (PFKA) family. ATP-dependent PFK group I subfamily. Prokaryotic clade 'B1' sub-subfamily. In terms of assembly, homotetramer. It depends on Mg(2+) as a cofactor.

The protein resides in the cytoplasm. It catalyses the reaction beta-D-fructose 6-phosphate + ATP = beta-D-fructose 1,6-bisphosphate + ADP + H(+). The protein operates within carbohydrate degradation; glycolysis; D-glyceraldehyde 3-phosphate and glycerone phosphate from D-glucose: step 3/4. Its activity is regulated as follows. Allosterically activated by ADP and other diphosphonucleosides, and allosterically inhibited by phosphoenolpyruvate. Catalyzes the phosphorylation of D-fructose 6-phosphate to fructose 1,6-bisphosphate by ATP, the first committing step of glycolysis. This is ATP-dependent 6-phosphofructokinase from Halalkalibacterium halodurans (strain ATCC BAA-125 / DSM 18197 / FERM 7344 / JCM 9153 / C-125) (Bacillus halodurans).